The sequence spans 380 residues: Outer membrane protein 40 (380 aa).

The signal sequence occupies residues 1–21; it reads MKAKSLLLALAGLACTFSATA. Pyrrolidone carboxylic acid is present on glutamine 22. Residues 270 to 380 enclose the OmpA-like domain; it reads PTVTRVVVDN…NRIVVMTAAE (111 aa).

It belongs to the outer membrane OOP (TC 1.B.6) superfamily. In terms of assembly, disulfide-linked heterodimer with Omp41.

It localises to the cell outer membrane. In terms of biological role, may have porin activity and function in peptidoglycan binding. This Porphyromonas gingivalis (strain ATCC BAA-308 / W83) protein is Outer membrane protein 40.